Here is a 43-residue protein sequence, read N- to C-terminus: Protein PsbN (43 aa).

A helical membrane pass occupies residues Thr-5–Phe-27.

Belongs to the PsbN family.

The protein resides in the plastid. It is found in the chloroplast thylakoid membrane. Functionally, may play a role in photosystem I and II biogenesis. The chain is Protein PsbN from Houttuynia cordata (Chameleon plant).